Consider the following 969-residue polypeptide: Probable Rho-type GTPase-activating protein 3 (969 aa).

LIM zinc-binding domains follow at residues 17 to 81 (TVCF…CTAC) and 76 to 135 (HTCT…RHPS). 3 disordered regions span residues 170 to 223 (IEIM…ADSL), 348 to 459 (ATSP…VEEL), and 613 to 646 (TSSK…SPNL). Positions 193 to 202 (ETPTNMSQAE) are enriched in polar residues. Composition is skewed to low complexity over residues 212 to 223 (DSNLASNSADSL) and 350 to 361 (SPFRPFSPSYRS). Polar residues-rich tracts occupy residues 369–392 (TRSP…SFAQ) and 418–432 (LSET…SLGS). Basic and acidic residues predominate over residues 450–459 (SERDSDVEEL). Residues 613-623 (TSSKNTTSSIN) show a composition bias toward low complexity. The span at 624-637 (PLTAVSSNSGQSSG) shows a compositional bias: polar residues. The segment at 697-744 (DHVFHVNAIFKPSRCYICSESVWGSELRCFHCSISCHSRCLKRLFAES) adopts a Phorbol-ester/DAG-type zinc-finger fold. Residues 780-966 (RSLENQLKIE…FMLDNVDKIL (187 aa)) form the Rho-GAP domain.

In terms of assembly, interacts with dil1.

It localises to the cell tip. Its function is as follows. GTPase-activating protein for Rho-type proteins. The polypeptide is Probable Rho-type GTPase-activating protein 3 (rga3) (Schizosaccharomyces pombe (strain 972 / ATCC 24843) (Fission yeast)).